A 435-amino-acid chain; its full sequence is GTPase Der (435 aa).

EngA-type G domains lie at 4 to 167 (KIVA…SKND) and 175 to 350 (TKIA…QSLS). Residues 10–17 (GKPNVGKS), 57–61 (DTGGI), 119–122 (NKYD), 181–188 (GKPNVGKS), 228–232 (DTAGI), and 293–296 (NKWD) contribute to the GTP site. Residues 351 to 435 (VKVKTYVLNE…PINLIFRERK (85 aa)) form the KH-like domain.

Belongs to the TRAFAC class TrmE-Era-EngA-EngB-Septin-like GTPase superfamily. EngA (Der) GTPase family. In terms of assembly, associates with the 50S ribosomal subunit.

Functionally, GTPase that plays an essential role in the late steps of ribosome biogenesis. The chain is GTPase Der from Mycoplasma capricolum subsp. capricolum (strain California kid / ATCC 27343 / NCTC 10154).